Here is a 142-residue protein sequence, read N- to C-terminus: Large ribosomal subunit protein uL13 (142 aa).

The protein belongs to the universal ribosomal protein uL13 family. In terms of assembly, part of the 50S ribosomal subunit.

This protein is one of the early assembly proteins of the 50S ribosomal subunit, although it is not seen to bind rRNA by itself. It is important during the early stages of 50S assembly. This Bordetella bronchiseptica (strain ATCC BAA-588 / NCTC 13252 / RB50) (Alcaligenes bronchisepticus) protein is Large ribosomal subunit protein uL13.